Reading from the N-terminus, the 464-residue chain is MILANAFCLFFFLDETLRSLASPSSPQGPELHGWRPPVDCVRANELCAAESNCSSRYRTLRQCLAGRDRNTMLANKECQAALEVLQESPLYDCRCKRGMKKELQCLQIYWSIHLGLTEGEEFYEASPYEPVTARLSDIFRLASIFSGTGADPAVSTKSNHCLDAAKACNLNDNCKKLRSSYISICNREISPTERCNRRKCHKALRQFFDRVPSEYTYRMLFCSCQDQACAERRRQTILPSCSYEDKEKPNCLDLRSLCRTDHLCRSRLADFHANCRASYQTLTSCPTDNYQACLGSYAGMIGFDITPNYVDSSPTGIVVSPWCSCRGSGNMEEECEKFLKDFTENPCLRNAIQAFGNGTDVNLSPKSPPFQATQAPRVDKTPSLPDDLSDSTSLGTSVISTCTSVQDQGLKANNSKELSMCFTELTTNIIPGSKRVIKPNSGPRRTRPSAALTAASFLMLKLAL.

The signal sequence occupies residues 1–21 (MILANAFCLFFFLDETLRSLA). 14 cysteine pairs are disulfide-bonded: Cys-40–Cys-93, Cys-47–Cys-53, Cys-63–Cys-78, Cys-95–Cys-105, Cys-161–Cys-222, Cys-168–Cys-174, Cys-185–Cys-200, Cys-195–Cys-241, Cys-224–Cys-229, Cys-251–Cys-323, Cys-258–Cys-264, Cys-275–Cys-293, Cys-285–Cys-347, and Cys-325–Cys-335. Asn-52 carries an N-linked (GlcNAc...) asparagine glycan. Residue Asn-357 is glycosylated (N-linked (GlcNAc...) asparagine). Polar residues predominate over residues 360-374 (DVNLSPKSPPFQATQ). The tract at residues 360 to 392 (DVNLSPKSPPFQATQAPRVDKTPSLPDDLSDST) is disordered. Residues 381–392 (TPSLPDDLSDST) show a composition bias toward low complexity. Asn-413 carries an N-linked (GlcNAc...) asparagine glycan. Asn-440 carries GPI-anchor amidated asparagine lipidation. A propeptide spans 441 to 464 (SGPRRTRPSAALTAASFLMLKLAL) (removed in mature form).

It belongs to the GDNFR family. In terms of assembly, interacts with NRTN ligand and RET: forms a 2:2:2 ternary complex composed of NRTN ligand, GFRA2 and RET receptor. Also forms a 4:4:4 tetrameric complex composed of 4 copies of NRTN ligand, GFRA2 and RET receptor, which prevents endocytosis of RET. Interacts with SORL1.

It localises to the cell membrane. Receptor for neurturin (NRTN), a growth factor that supports the survival of sympathetic neurons. NRTN-binding leads to autophosphorylation and activation of the RET receptor. Also able to mediate GDNF signaling through the RET tyrosine kinase receptor. In Bos taurus (Bovine), this protein is GDNF family receptor alpha-2 (GFRA2).